The following is a 371-amino-acid chain: Cytokine receptor-like factor 2 (371 aa).

Residues 1 to 22 form the signal peptide; the sequence is MGRLVLLWGAAVFLLGGWMALG. Over 23–231 the chain is Extracellular; the sequence is QGGAAEGVQI…PTPPKPKLSK (209 aa). Asparagine 47 and asparagine 55 each carry an N-linked (GlcNAc...) asparagine glycan. A disulfide bridge links cysteine 71 with cysteine 84. Residues asparagine 101 and asparagine 169 are each glycosylated (N-linked (GlcNAc...) asparagine). Residues 118-211 form the Fibronectin type-III domain; it reads KPSSPKHVRF…DWSEVTCWQR (94 aa). A disulfide bridge connects residues cysteine 180 and cysteine 218. The short motif at 200-204 is the WSXWS motif element; sequence PSDWS. The helical transmembrane segment at 232 to 252 threads the bilayer; the sequence is FILISSLAILLMVSLLLLSLW. Over 253–371 the chain is Cytoplasmic; the sequence is KLWRVKKFLI…VMNDRSYVAL (119 aa). Positions 261 to 269 match the Box 1 motif motif; the sequence is LIPSVPDPK. The segment covering 322-336 has biased composition (basic and acidic residues); that stretch reads ESPRMLDPQTEEKEA. The tract at residues 322–347 is disordered; the sequence is ESPRMLDPQTEEKEASGGSLQLPHQP.

This sequence belongs to the type I cytokine receptor family. Type 5 subfamily. As to quaternary structure, heterodimer of CRLF2 and IL7R. As to expression, expressed in heart, skeletal muscle, kidney and adult and fetal liver. Primarily expressed in dendrites and monocytes. Weakly expressed in T-cells.

Its subcellular location is the cell membrane. The protein localises to the secreted. In terms of biological role, receptor for thymic stromal lymphopoietin (TSLP). Forms a functional complex with TSLP and IL7R which is capable of stimulating cell proliferation through activation of STAT3 and STAT5. Also activates JAK2. Implicated in the development of the hematopoietic system. In Homo sapiens (Human), this protein is Cytokine receptor-like factor 2 (CRLF2).